The primary structure comprises 410 residues: MPDIGTDLVEVIEILVKIGDQVKKDDSLITVEGQKASIEIPASHTGTIKNIIVHIGEKITTGSLIAILNGIDDNVKSKNDSSSYSFKNSKNTSTNSNLGNVNNNINNRTILVHATPTVRRLARKFDIKLENITGTGRKGRILKEDVISYKNISLFNDIKKSLKKTNVNYYKDNVTCDDFKSIELTRTQIRSSKNLLKSWLTIPHVTQFDESDITELENFRQKYNSDLKDKSKKLTILIFVIKAVSKALEMFPKFNGRLINKDNRIAIVLNEHINIGIVVDTDDGLLVPVINRVNKKNISSISNDLRIISERARSRKLNFSDIKEYGSFTISNLGGIGGTNFTPIIKYPELAILGISRALIKPYWNSHAFIPKLMLPLSLSYDHRAIDGVAAVRFITFVKKMLTDIRFLMI.

The 69-residue stretch at methionine 1 to asparagine 69 folds into the Lipoyl-binding domain. An N6-lipoyllysine modification is found at lysine 35. The segment at serine 81–asparagine 100 is disordered. Positions histidine 113–lysine 150 constitute a Peripheral subunit-binding (PSBD) domain. The active site involves histidine 383.

Belongs to the 2-oxoacid dehydrogenase family. In terms of assembly, forms a 24-polypeptide structural core with octahedral symmetry. It depends on (R)-lipoate as a cofactor.

It catalyses the reaction N(6)-[(R)-dihydrolipoyl]-L-lysyl-[protein] + acetyl-CoA = N(6)-[(R)-S(8)-acetyldihydrolipoyl]-L-lysyl-[protein] + CoA. Functionally, the pyruvate dehydrogenase complex catalyzes the overall conversion of pyruvate to acetyl-CoA and CO(2). It contains multiple copies of three enzymatic components: pyruvate dehydrogenase (E1), dihydrolipoamide acetyltransferase (E2) and lipoamide dehydrogenase (E3). The sequence is that of Dihydrolipoyllysine-residue acetyltransferase component of pyruvate dehydrogenase complex (aceF) from Buchnera aphidicola subsp. Baizongia pistaciae (strain Bp).